The following is a 558-amino-acid chain: Trehalase 1 (558 aa).

The protein belongs to the glycosyl hydrolase 15 family.

It carries out the reaction alpha,alpha-trehalose + H2O = alpha-D-glucose + beta-D-glucose. It participates in glycan degradation; trehalose degradation; D-glucose from alpha,alpha-trehalose: step 1/1. Its function is as follows. Catalyzes the hydrolysis of alpha,alpha-trehalose into two molecules of D-glucose. This Sulfolobus acidocaldarius (strain ATCC 33909 / DSM 639 / JCM 8929 / NBRC 15157 / NCIMB 11770) protein is Trehalase 1 (treH1).